Here is an 85-residue protein sequence, read N- to C-terminus: Large ribosomal subunit protein bL27 (85 aa).

A disordered region spans residues 1 to 22; the sequence is MAHKKGVGSTRNGRDSESKRLG.

It belongs to the bacterial ribosomal protein bL27 family.

The chain is Large ribosomal subunit protein bL27 from Geobacter metallireducens (strain ATCC 53774 / DSM 7210 / GS-15).